An 828-amino-acid polypeptide reads, in one-letter code: MAAEEADVDIEGDVVAAAGAQPGSGENTASVLQKDHYLDSSWRTENGLIPWTLDNTISEENRAVIEKMLLEEEYYLSKKSQPEKVWLDQKEDDKKYMKSLQKTAKIMVHSPTKPASYSVKWTIEEKELFEQGLAKFGRRWTKISKLIGSRTVLQVKSYARQYFKNKVKCGLDKETPNQKTGHNLQVKNEDKGTKAWTPSCLRGRADPNLNAVKIEKLSDDEEVDITDEVDELSSQTPQKNSSSDLLLDFPNSKMHETNQGEFITSDSQEALFSKSSRGCLQNEKQDETLSSSEITLWTEKQSNGDKKSIELNDQKFNELIKNCNKHDGRGIIVDARQLPSPEPCEIQKNLNDNEMLFHSCQMVEESHEEEELKPPEQEIEIDRNIIQEEEKQAIPEFFEGRQAKTPERYLKIRNYILDQWEICKPKYLNKTSVRPGLKNCGDVNCIGRIHTYLELIGAINFGCEQAVYNRPQTVDKVRIRDRKDAVEAYQLAQRLQSMRTRRRRVRDPWGNWCDAKDLEGQTFEHLSAEELAKRREEEKGRPVKSLKVPRPTKSSFDPFQLIPCNFFSEEKQEPFQVKVASEALLIMDLHAHVSMAEVIGLLGGRYSEVDKVVEVCAAEPCNSLSTGLQCEMDPVSQTQASETLAVRGFSVIGWYHSHPAFDPNPSLRDIDTQAKYQSYFSRGGAKFIGMIVSPYNRNNPLPYSQITCLVISEEISPDGSYRLPYKFEVQQMLEEPQWGLVFEKTRWIIEKYRLSHSSVPMDKIFRRDSDLTCLQKLLECMRKTLSKVTNCFMAEEFLTEIENLFLSNYKSNQENGVTEENCTKELLM.

Residues 1 to 12 (MAAEEADVDIEG) show a composition bias toward acidic residues. The tract at residues 1–31 (MAAEEADVDIEGDVVAAAGAQPGSGENTASV) is disordered. Phosphoserine is present on serine 110. In terms of domain architecture, SANT spans 116-167 (SYSVKWTIEEKELFEQGLAKFGRRWTKISKLIGSRTVLQVKSYARQYFKNKV). A Glycyl lysine isopeptide (Lys-Gly) (interchain with G-Cter in SUMO2) cross-link involves residue lysine 187. Serine 218 bears the Phosphoserine mark. Threonine 236 is modified (phosphothreonine). Phosphoserine is present on residues serine 242, serine 267, and serine 340. The SWIRM domain occupies 372–470 (LKPPEQEIEI…FGCEQAVYNR (99 aa)). One can recognise an MPN domain in the interval 577 to 709 (VKVASEALLI…PLPYSQITCL (133 aa)). Zn(2+) is bound by residues histidine 656, histidine 658, and aspartate 669. Residues 656-669 (HSHPAFDPNPSLRD) carry the JAMM motif motif. Residues 774 to 778 (LQKLL) carry the LXXLL motif motif.

Belongs to the peptidase M67A family. MYSM1 subfamily. Component of a large chromatin remodeling complex, at least composed of MYSM1, PCAF, RBM10 and KIF11/TRIP5. Binds histones. Interacts with NFIL3; this interaction is critical for their correct recruitment to the ID2 locus during natural killer cell maturation.

The protein localises to the nucleus. Its subcellular location is the cytoplasm. Metalloprotease with deubiquitinase activity that plays important regulator roles in hematopoietic stem cell function, blood cell production and immune response. Participates in the normal programming of B-cell responses to antigen after the maturation process. Within the cytoplasm, plays critical roles in the repression of innate immunity and autoimmunity. Removes 'Lys-63'-linked polyubiquitins from TRAF3 and TRAF6 complexes. Attenuates NOD2-mediated inflammation and tissue injury by promoting 'Lys-63'-linked deubiquitination of RIPK2 component. Suppresses the CGAS-STING1 signaling pathway by cleaving STING1 'Lys-63'-linked ubiquitin chains. In the nucleus, acts as a hematopoietic transcription regulator derepressing a range of genes essential for normal stem cell differentiation including EBF1 and PAX5 in B-cells, ID2 in NK-cell progenitor or FLT3 in dendritic cell precursors. Deubiquitinates monoubiquitinated histone H2A, a specific tag for epigenetic transcriptional repression, leading to dissociation of histone H1 from the nucleosome. This Homo sapiens (Human) protein is Deubiquitinase MYSM1 (MYSM1).